Here is a 471-residue protein sequence, read N- to C-terminus: PE-PGRS family protein PE_PGRS33 (471 aa).

The tract at residues 1-30 (MSFVVTIPEALAAVATDLAGIGSTIGTANA) is essential for translocation to the cell surface. Positions 1 to 93 (MSFVVTIPEA…AGSYAAAEAA (93 aa)) constitute a PE domain. The interval 140–230 (GNGGAGGSGA…GLFFGVGGAG (91 aa)) is interacts with TLR2.

It belongs to the mycobacterial PE family. PGRS subfamily. Interacts with human TLR2.

The protein resides in the secreted. The protein localises to the cell wall. Its subcellular location is the cell surface. It localises to the cell outer membrane. Its function is as follows. Induces TNF-alpha release through human Toll-like receptor 2 (TLR2) signaling pathway, leading to macrophage apoptosis. The sequence is that of PE-PGRS family protein PE_PGRS33 (PE_PGRS33) from Mycobacterium tuberculosis (strain CDC 1551 / Oshkosh).